Reading from the N-terminus, the 187-residue chain is Photosystem I assembly protein Ycf4 (187 aa).

The next 2 membrane-spanning stretches (helical) occupy residues L21–S43 and L69–G91.

This sequence belongs to the Ycf4 family.

Its subcellular location is the plastid. It localises to the cyanelle thylakoid membrane. Functionally, seems to be required for the assembly of the photosystem I complex. The polypeptide is Photosystem I assembly protein Ycf4 (Cyanophora paradoxa).